The chain runs to 294 residues: Lysozyme M1 (294 aa).

The region spanning 81-294 is the Ch-type lysozyme domain; that stretch reads GVQGIDVSHW…RLLALANNTA (214 aa). Residues D86, D175, and E177 contribute to the active site. A disulfide bond links C185 and C224.

It belongs to the glycosyl hydrolase 25 family.

It localises to the secreted. The catalysed reaction is Hydrolysis of (1-&gt;4)-beta-linkages between N-acetylmuramic acid and N-acetyl-D-glucosamine residues in a peptidoglycan and between N-acetyl-D-glucosamine residues in chitodextrins.. This enzyme has both lysozyme (acetylmuramidase) and diacetylmuramidase activities. This is Lysozyme M1 (acm) from Streptomyces globisporus.